Consider the following 155-residue polypeptide: Regulatory protein RecX (155 aa).

The protein belongs to the RecX family.

It localises to the cytoplasm. In terms of biological role, modulates RecA activity. The polypeptide is Regulatory protein RecX (Pseudomonas savastanoi pv. phaseolicola (strain 1448A / Race 6) (Pseudomonas syringae pv. phaseolicola (strain 1448A / Race 6))).